The sequence spans 2161 residues: DNA polymerase epsilon catalytic subunit A (2161 aa).

3 consecutive short sequence motifs (nuclear localization signal) follow at residues Asn5–Asp12, His1137–Asp1144, and Leu1239–Val1246. Residues Cys2038, Cys2041, Cys2063, and Cys2068 each contribute to the Zn(2+) site. The CysA-type zinc finger occupies Cys2038–Cys2068. Residues Cys2099, Cys2102, Cys2114, and Cys2116 each coordinate [4Fe-4S] cluster. The short motif at Cys2099–Cys2116 is the CysB motif element. The short motif at Ser2130–Met2137 is the Nuclear localization signal 4 element.

It belongs to the DNA polymerase type-B family. Heterotetramer. Subunit of the DNA polymerase II. Interacts (via C-terminus) with DPB2. Interacts with LHP1/TFL2. Requires [4Fe-4S] cluster as cofactor. Mostly expressed at low levels in inflorescence (floral meristem and flowers until anthesis), and, to a lower extent, in roots, seeds and leaves.

The protein resides in the nucleus. It carries out the reaction DNA(n) + a 2'-deoxyribonucleoside 5'-triphosphate = DNA(n+1) + diphosphate. DNA polymerase II, which participates in chromosomal DNA replication. Required for the timing and determination of cell fate during plant embryogenesis and root pole development, by promoting cell cycle and cell type patterning. Necessary for proper shoot (SAM) and root apical meristem (RAM) functions. Involved in maintaining epigenetic states, controlling hypersensitive response (HR), and mediating abscisic acid (ABA) signaling. Required for flowering repression through a mechanism involving epigenetic gene silencing. May participate in processes involved in chromatin-mediated cellular memory. This chain is DNA polymerase epsilon catalytic subunit A (POL2A), found in Arabidopsis thaliana (Mouse-ear cress).